The following is a 247-amino-acid chain: C-X-C motif chemokine 16 (247 aa).

The signal sequence occupies residues 1 to 26; that stretch reads MRRGFGPLALTLFLFFFALLTLPGDG. Residues 27-198 lie on the Extracellular side of the membrane; the sequence is NQGSVAGSCY…EPGAGAGTQA (172 aa). 2 cysteine pairs are disulfide-bonded: Cys35-Cys65 and Cys37-Cys79. The segment at 120 to 152 is disordered; it reads IPEATEGKPPDTSTAVQFQSTQQSTFPSGAPSL. A compositionally biased stretch (low complexity) spans 131–147; sequence TSTAVQFQSTQQSTFPS. The chain crosses the membrane as a helical span at residues 199–219; sequence LVPVLSLLAIVFFLVAAMVCV. The Cytoplasmic portion of the chain corresponds to 220-247; it reads LCNRRVTRQSSSGLQLCYTPVEPRPQGL.

This sequence belongs to the intercrine alpha (chemokine CxC) family. Post-translationally, glycosylated.

It localises to the membrane. In terms of biological role, induces a strong chemotactic response. Induces calcium mobilization. Binds to CXCR6/Bonzo. Also acts as a scavenger receptor on macrophages, which specifically binds to OxLDL (oxidized low density lipoprotein), suggesting that it may be involved in pathophysiology such as atherogenesis. This chain is C-X-C motif chemokine 16 (Cxcl16), found in Rattus norvegicus (Rat).